The chain runs to 308 residues: Porphobilinogen deaminase (308 aa).

C241 carries the post-translational modification S-(dipyrrolylmethanemethyl)cysteine.

The protein belongs to the HMBS family. As to quaternary structure, monomer. Dipyrromethane serves as cofactor.

It carries out the reaction 4 porphobilinogen + H2O = hydroxymethylbilane + 4 NH4(+). It functions in the pathway porphyrin-containing compound metabolism; protoporphyrin-IX biosynthesis; coproporphyrinogen-III from 5-aminolevulinate: step 2/4. Functionally, tetrapolymerization of the monopyrrole PBG into the hydroxymethylbilane pre-uroporphyrinogen in several discrete steps. The protein is Porphobilinogen deaminase of Staphylococcus aureus (strain bovine RF122 / ET3-1).